A 924-amino-acid chain; its full sequence is MAGILSVVHIIIIFIVRFKSSTDSLITVVVSASFQRANIYKFSLLAKLAHGAALIPRADADTWTYLGCYTDQVGARTLGQVGYTLGGPGNMTVANCQNGCASQGYSLAGVEYSSECWCDNQLRNGGGPAPDGEAMCSMPCNGNPEQKCGGPGRLNLYQNTAIKPTDTMTTSAPSTETGSPTTTSVPEPTQGLPDGWQYSGCYQDNVNGGRVMFKMLPDSSTLTIESCVAMCVKLGYTVAGAEYSKQCFCDNYLRNAAPQAIESECSMTCSGNTQQKCGGPSRLSVYSKGNLTVLPIPVPQTGGLPGGWKYQGCLQDNVNMKRTFPYQIVDKTNNTATNCLSRCSKFGFGAGGMTYSEECFCGDFEDIAAAGAKLVPEAMCSQTCSGNATAICGAGNLITYYRWMDEPLQKWNRPTGINAGRYDFLIGGVLVPLITTVGINGKITFQEKSGTGDPNTTGAYEFDPYYEKDFSKAWREMHVKTDIFCAGGLVLPDKVGRQLTVGGWSGISTEGVRLYWPDGSPGKPGVNDWHESPDDLRLQNGRWYPTAMTMSNGSILVVGGEEGSNGAPVPTLEILPRVGPVLFMDWLKRTDPNNLYPYLTPLPGGNILAAYYNEARILDERTFDTVKTLPNIPGAVNNDAGGRTYPLEGTMVLLPQKAPYTEPLGVLICGGSTPYGGDALDNCVSIQPEVPNAEWVIERMPSKRVLTCMAGLPDGTFLILNGARKGVAGFGLAEDPNLGAVLYDPSKPVNQRMSIMANTTIARMYHSEAILMADGRVLVSGSDPQDPRFPQERRVEVFLPPYILSGARRPTFTIANKDWAYGGKYKIKITSGNQSRIKISLMGMVSSTHGNSFGSRTIFPAFSCSFGTCTITAPPDSHTCPPGWFMLFVLDGPTPSVASFVRIGGDPGRLGDWPATGGFPLPGV.

A signal peptide spans 1–24 (MAGILSVVHIIIIFIVRFKSSTDS). One can recognise a WSC 1 domain in the interval 62–160 (TWTYLGCYTD…PGRLNLYQNT (99 aa)). An N-linked (GlcNAc...) asparagine glycan is attached at Asn90. The interval 166-190 (DTMTTSAPSTETGSPTTTSVPEPTQ) is disordered. The segment covering 169 to 189 (TTSAPSTETGSPTTTSVPEPT) has biased composition (low complexity). In terms of domain architecture, WSC 2 spans 195–289 (GWQYSGCYQD…PSRLSVYSKG (95 aa)). 7 N-linked (GlcNAc...) asparagine glycosylation sites follow: Asn290, Asn333, Asn387, Asn455, Asn552, Asn758, and Asn833. Positions 307 to 404 (GWKYQGCLQD…GNLITYYRWM (98 aa)) constitute a WSC 3 domain.

It is found in the secreted. This Arthroderma benhamiae (strain ATCC MYA-4681 / CBS 112371) (Trichophyton mentagrophytes) protein is WSC domain-containing protein ARB_07867.